Consider the following 545-residue polypeptide: Chaperonin GroEL (545 aa).

Residues 29-32 (TLGP), lysine 50, 86-90 (DGTTT), glycine 415, and aspartate 495 each bind ATP.

It belongs to the chaperonin (HSP60) family. As to quaternary structure, forms a cylinder of 14 subunits composed of two heptameric rings stacked back-to-back. Interacts with the co-chaperonin GroES.

It localises to the cytoplasm. It catalyses the reaction ATP + H2O + a folded polypeptide = ADP + phosphate + an unfolded polypeptide.. In terms of biological role, together with its co-chaperonin GroES, plays an essential role in assisting protein folding. The GroEL-GroES system forms a nano-cage that allows encapsulation of the non-native substrate proteins and provides a physical environment optimized to promote and accelerate protein folding. The polypeptide is Chaperonin GroEL (Bacteroides fragilis (strain ATCC 25285 / DSM 2151 / CCUG 4856 / JCM 11019 / LMG 10263 / NCTC 9343 / Onslow / VPI 2553 / EN-2)).